Consider the following 184-residue polypeptide: NADH-quinone oxidoreductase subunit B (184 aa).

Residues Cys37, Cys38, Cys103, and Cys132 each contribute to the [4Fe-4S] cluster site.

It belongs to the complex I 20 kDa subunit family. As to quaternary structure, NDH-1 is composed of 14 different subunits. Subunits NuoB, C, D, E, F, and G constitute the peripheral sector of the complex. [4Fe-4S] cluster serves as cofactor.

It is found in the cell membrane. It carries out the reaction a quinone + NADH + 5 H(+)(in) = a quinol + NAD(+) + 4 H(+)(out). NDH-1 shuttles electrons from NADH, via FMN and iron-sulfur (Fe-S) centers, to quinones in the respiratory chain. The immediate electron acceptor for the enzyme in this species is believed to be a menaquinone. Couples the redox reaction to proton translocation (for every two electrons transferred, four hydrogen ions are translocated across the cytoplasmic membrane), and thus conserves the redox energy in a proton gradient. The chain is NADH-quinone oxidoreductase subunit B from Mycobacterium marinum (strain ATCC BAA-535 / M).